Consider the following 513-residue polypeptide: Secreted LysM effector Vd6LysM (513 aa).

The N-terminal stretch at 1–19 (MSFIKSLLLAAAAVASVSA) is a signal peptide. LysM domains follow at residues 38-85 (SYWV…SYCV), 136-182 (KFHW…NVCV), 219-265 (KFHW…QVCV), and 302-348 (KFHW…QVCV). Residues 357–367 (TTTRPPTTTAP) are compositionally biased toward low complexity. A disordered region spans residues 357 to 377 (TTTRPPTTTAPGNGVSTPQPT). 2 consecutive LysM domains span residues 387–433 (KFHW…NVCV) and 465–511 (KFHW…NVCV).

It belongs to the secreted LysM effector family.

Its function is as follows. Might have a role in sequestration of chitin oligosaccharides (breakdown products of fungal cell walls that are released during invasion and act as triggers of host immunity) to dampen host defense. Does not play an important role during host colonization. In Verticillium dahliae (strain VdLs.17 / ATCC MYA-4575 / FGSC 10137) (Verticillium wilt), this protein is Secreted LysM effector Vd6LysM.